The chain runs to 255 residues: HLA class II histocompatibility antigen, DQ alpha 2 chain (255 aa).

The N-terminal stretch at 1–23 (MILNKALLLGALALTAVMSPCGG) is a signal peptide. Residues 24-110 (EDIVADHVAS…RQSNSTAATN (87 aa)) are alpha-1. Residues 24–217 (EDIVADHVAS…IPAPMSELTE (194 aa)) are Extracellular-facing. N-linked (GlcNAc...) asparagine glycans are attached at residues Asn104 and Asn144. Positions 111 to 204 (EVPEVTVFSK…GLDEPLLKHW (94 aa)) are alpha-2. An Ig-like C1-type domain is found at 113–205 (PEVTVFSKFP…LDEPLLKHWE (93 aa)). Cys133 and Cys189 are joined by a disulfide. A connecting peptide region spans residues 205-217 (EPEIPAPMSELTE). Residues 218 to 240 (TLVCALGLSVGLMGIVVGTVFII) form a helical membrane-spanning segment. Over 241–255 (QGLRSVGASRHQGLL) the chain is Cytoplasmic.

The protein belongs to the MHC class II family. Heterodimer of an alpha and a beta subunit; also referred as MHC class II molecule. Dimer formation with HLA-DQB2, but not with HLA-DQB1, is required for efficient exit from the endoplasmic reticulum (ER). In the ER, forms a heterononamer; 3 MHC class II molecules bind to a CD74 homotrimer (also known as invariant chain or HLA class II histocompatibility antigen gamma chain). In the endosomal/lysosomal system; CD74 undergoes sequential degradation by various proteases; leaving a small fragment termed CLIP on each MHC class II molecule. MHC class II molecule interacts with HLA_DM, and HLA_DO in B-cells, in order to release CLIP and facilitate the binding of antigenic peptides. Association with HLA-DMA also occurs in skin Langerhans cells, in post-Golgi compartments. As to expression, restricted to skin Langerhans cells, although some expression at low levels may occur at the surface of B lymphoblastoid cells.

Its subcellular location is the cell membrane. It is found in the endoplasmic reticulum membrane. It localises to the golgi apparatus. The protein localises to the trans-Golgi network membrane. The protein resides in the endosome membrane. Its subcellular location is the lysosome membrane. Functionally, binds peptides derived from antigens that access the endocytic route of antigen presenting cells (APC) and presents them on the cell surface for recognition by the CD4 T-cells. The peptide binding cleft accommodates peptides of 10-30 residues. The peptides presented by MHC class II molecules are generated mostly by degradation of proteins that access the endocytic route, where they are processed by lysosomal proteases and other hydrolases. Exogenous antigens that have been endocytosed by the APC are thus readily available for presentation via MHC II molecules, and for this reason this antigen presentation pathway is usually referred to as exogenous. As membrane proteins on their way to degradation in lysosomes as part of their normal turn-over are also contained in the endosomal/lysosomal compartments, exogenous antigens must compete with those derived from endogenous components. Autophagy is also a source of endogenous peptides, autophagosomes constitutively fuse with MHC class II loading compartments. In addition to APCs, other cells of the gastrointestinal tract, such as epithelial cells, express MHC class II molecules and CD74 and act as APCs, which is an unusual trait of the GI tract. To produce a MHC class II molecule that presents an antigen, three MHC class II molecules (heterodimers of an alpha and a beta chain) associate with a CD74 trimer in the ER to form a heterononamer. Soon after the entry of this complex into the endosomal/lysosomal system where antigen processing occurs, CD74 undergoes a sequential degradation by various proteases, including CTSS and CTSL, leaving a small fragment termed CLIP (class-II-associated invariant chain peptide). The removal of CLIP is facilitated by HLA-DM via direct binding to the alpha-beta-CLIP complex so that CLIP is released. HLA-DM stabilizes MHC class II molecules until primary high affinity antigenic peptides are bound. The MHC II molecule bound to a peptide is then transported to the cell membrane surface. In B-cells, the interaction between HLA-DM and MHC class II molecules is regulated by HLA-DO. Primary dendritic cells (DCs) also to express HLA-DO. Lysosomal microenvironment has been implicated in the regulation of antigen loading into MHC II molecules, increased acidification produces increased proteolysis and efficient peptide loading. This is HLA class II histocompatibility antigen, DQ alpha 2 chain (HLA-DQA2) from Homo sapiens (Human).